The sequence spans 586 residues: Probable transporter AQR1 (586 aa).

Disordered stretches follow at residues 1-44 (MSRS…FEGA) and 61-82 (EGDLDSETSSHSSDDKVDPTQQ). The Extracellular portion of the chain corresponds to 1 to 99 (MSRSNSIYTE…PYTLLSYGQK (99 aa)). The segment covering 19-40 (NEQHLTREYTKPDGQTKSEKLN) has biased composition (basic and acidic residues). Residues 100–120 (WGMVAILTMCGFWSSLGSPIY) traverse the membrane as a helical segment. Residues 121 to 139 (YPALRQLEKQFNVDENMVN) lie on the Cytoplasmic side of the membrane. A helical transmembrane segment spans residues 140 to 160 (VTVVVYLLFQGISPTVSGGLA). Residues 161–166 (DCFGRR) are Extracellular-facing. The chain crosses the membrane as a helical span at residues 167 to 187 (PIILAGMLIYVIASIGLACAP). Position 188 (Ser-188) is a topological domain, cytoplasmic. The chain crosses the membrane as a helical span at residues 189–209 (YGVIIFLRCIQSIGISPTIAI). The Extracellular segment spans residues 210–225 (SSGVVGDFTLKHERGT). A helical transmembrane segment spans residues 226–246 (FVGATSGFVLLGQCFGSLIGA). Over 247–255 (VLTARWDWR) the chain is Cytoplasmic. Residues 256 to 276 (AIFWFLTIGCGSCFLIAFLIL) form a helical membrane-spanning segment. The Extracellular portion of the chain corresponds to 277–334 (PETKRTIAGNLSIKPKRFINRAPIFLLGPVRRRFKYDNPDYETLDPTIPKLDLSSAGK). A helical membrane pass occupies residues 335-355 (ILVLPEIILSLFPSGLLFAMW). Over 356-374 (TLMLSSISSGLSVAPYNYH) the chain is Cytoplasmic. Residues 375–395 (LVIIGVCYLPGGIGGLMGSFF) traverse the membrane as a helical segment. Residues 396-433 (TGRIIDMYFKRKIKKFEQDKANGLIPQDAEINMFKVRL) lie on the Extracellular side of the membrane. Residues 434–454 (VCLLPQNFLAVVAYLLFGWSI) traverse the membrane as a helical segment. Over 455–459 (DKGWR) the chain is Cytoplasmic. A helical transmembrane segment spans residues 460–480 (IESILITSFVCSYCAMSTLST). Residues 481–523 (STTLLVDLYPTKSSTASSCFNFVRCSLSTIFMGCFAKMKAAMT) lie on the Extracellular side of the membrane. Residues 524–544 (VGGTFTFLCALVFFFNFLMFI) form a helical membrane-spanning segment. Over 545 to 586 (PMKYGMKWREDRLLKQQRQSWLNTLAVKAKKGTKRDQNDNHN) the chain is Cytoplasmic.

Belongs to the major facilitator superfamily. CAR1 family.

It is found in the membrane. In terms of biological role, probable transporter that confers resistance to short-chain monocarboxylic acids and quinidine. The protein is Probable transporter AQR1 (AQR1) of Saccharomyces cerevisiae (strain ATCC 204508 / S288c) (Baker's yeast).